We begin with the raw amino-acid sequence, 118 residues long: Phosphoribosyl-AMP cyclohydrolase (118 aa).

D85 lines the Mg(2+) pocket. C86 provides a ligand contact to Zn(2+). Mg(2+) contacts are provided by D87 and D89. Zn(2+) contacts are provided by C102 and C109.

This sequence belongs to the PRA-CH family. Homodimer. Mg(2+) serves as cofactor. It depends on Zn(2+) as a cofactor.

The protein resides in the cytoplasm. The enzyme catalyses 1-(5-phospho-beta-D-ribosyl)-5'-AMP + H2O = 1-(5-phospho-beta-D-ribosyl)-5-[(5-phospho-beta-D-ribosylamino)methylideneamino]imidazole-4-carboxamide. It functions in the pathway amino-acid biosynthesis; L-histidine biosynthesis; L-histidine from 5-phospho-alpha-D-ribose 1-diphosphate: step 3/9. Functionally, catalyzes the hydrolysis of the adenine ring of phosphoribosyl-AMP. This is Phosphoribosyl-AMP cyclohydrolase from Sulfurisphaera tokodaii (strain DSM 16993 / JCM 10545 / NBRC 100140 / 7) (Sulfolobus tokodaii).